Here is a 193-residue protein sequence, read N- to C-terminus: MNNLEAILRLKTIDAAKKLLGHFLVSKYNNKILIGKIVETEAYLYNDPACHSYSNRTKRNSMMYAQAGTSYVYFTYGMHYCFNVVTADVGIGEAILIRALEPIAGIEQMQLNRSKTKLIDLCSGPAKLTQALNINLKDNGINLLDKDSSILLRYNNDLINEIDIVQTQRIGISKAKDMPYRFYIKDNIFVSKK.

It belongs to the DNA glycosylase MPG family.

This chain is Putative 3-methyladenine DNA glycosylase, found in Francisella tularensis subsp. holarctica (strain FTNF002-00 / FTA).